A 505-amino-acid chain; its full sequence is GMP synthase [glutamine-hydrolyzing] (505 aa).

In terms of domain architecture, Glutamine amidotransferase type-1 spans 3–190 (KVLVVNFGGQ…LRKIARISDV (188 aa)). Cys-80 acts as the Nucleophile in catalysis. Catalysis depends on residues His-164 and Glu-166. The GMPS ATP-PPase domain occupies 191 to 380 (WRPEDQITRI…LGLPEDVVYR (190 aa)). 218–224 (SGGVDST) is a binding site for ATP.

The catalysed reaction is XMP + L-glutamine + ATP + H2O = GMP + L-glutamate + AMP + diphosphate + 2 H(+). The protein operates within purine metabolism; GMP biosynthesis; GMP from XMP (L-Gln route): step 1/1. In terms of biological role, catalyzes the synthesis of GMP from XMP. This is GMP synthase [glutamine-hydrolyzing] from Pyrobaculum aerophilum (strain ATCC 51768 / DSM 7523 / JCM 9630 / CIP 104966 / NBRC 100827 / IM2).